A 250-amino-acid polypeptide reads, in one-letter code: Maleate isomerase (250 aa).

Residues Asn-15, 80–82 (CLV), Tyr-137, and Asn-167 contribute to the substrate site. The active-site Nucleophile is Cys-80. Cys-80 bears the S-(2-succinyl)cysteine mark. Residue Cys-198 is the Proton donor of the active site. 199-200 (VQ) provides a ligand contact to substrate.

It belongs to the maleate isomerase family. As to quaternary structure, homodimer.

The enzyme catalyses maleate = fumarate. It participates in cofactor degradation; nicotinate degradation. Catalyzes cis-trans isomerization of the C2-C3 double bond in maleate to yield fumarate in the aerobic nicotinate degradation pathway. This is Maleate isomerase from Pseudomonas putida (strain ATCC 47054 / DSM 6125 / CFBP 8728 / NCIMB 11950 / KT2440).